The following is a 294-amino-acid chain: Bifunctional protein FolD (294 aa).

Residues 176 to 178 (GAS), S201, and I242 contribute to the NADP(+) site.

The protein belongs to the tetrahydrofolate dehydrogenase/cyclohydrolase family. In terms of assembly, homodimer.

The catalysed reaction is (6R)-5,10-methylene-5,6,7,8-tetrahydrofolate + NADP(+) = (6R)-5,10-methenyltetrahydrofolate + NADPH. It catalyses the reaction (6R)-5,10-methenyltetrahydrofolate + H2O = (6R)-10-formyltetrahydrofolate + H(+). The protein operates within one-carbon metabolism; tetrahydrofolate interconversion. In terms of biological role, catalyzes the oxidation of 5,10-methylenetetrahydrofolate to 5,10-methenyltetrahydrofolate and then the hydrolysis of 5,10-methenyltetrahydrofolate to 10-formyltetrahydrofolate. In Bordetella petrii (strain ATCC BAA-461 / DSM 12804 / CCUG 43448), this protein is Bifunctional protein FolD.